Consider the following 253-residue polypeptide: Ubiquinone biosynthesis O-methyltransferase (253 aa).

S-adenosyl-L-methionine is bound by residues Arg45, Gly76, Asp97, and Met140.

It belongs to the methyltransferase superfamily. UbiG/COQ3 family.

The enzyme catalyses a 3-demethylubiquinol + S-adenosyl-L-methionine = a ubiquinol + S-adenosyl-L-homocysteine + H(+). The catalysed reaction is a 3-(all-trans-polyprenyl)benzene-1,2-diol + S-adenosyl-L-methionine = a 2-methoxy-6-(all-trans-polyprenyl)phenol + S-adenosyl-L-homocysteine + H(+). It functions in the pathway cofactor biosynthesis; ubiquinone biosynthesis. Its function is as follows. O-methyltransferase that catalyzes the 2 O-methylation steps in the ubiquinone biosynthetic pathway. The sequence is that of Ubiquinone biosynthesis O-methyltransferase from Parvibaculum lavamentivorans (strain DS-1 / DSM 13023 / NCIMB 13966).